A 105-amino-acid polypeptide reads, in one-letter code: Dicamba O-demethylase, ferredoxin component (105 aa).

The region spanning 2-105 (PQITVVNQSG…GIKVTIAQED (104 aa)) is the 2Fe-2S ferredoxin-type domain. Residues C40, C46, C49, and C86 each coordinate [2Fe-2S] cluster.

The protein belongs to the adrenodoxin/putidaredoxin family. As to quaternary structure, monomer. The dicamba O-demethylase multicomponent enzyme system is composed of an oxygenase component (DdmC) and an electron transfer component formed by a ferredoxin reductase (DdmA1) and a ferredoxin (DdmB). In vitro, dicamba O-demethylase assays in which DdmA2 is substituted for DdmA1 demonstrate that the two enzymes possess nearly identical activities. [2Fe-2S] cluster is required as a cofactor.

Functionally, component of the dicamba O-demethylase multicomponent enzyme system involved in the degradation of the herbicide dicamba. In vitro, functions as an intermediate electron transfer protein. This Stenotrophomonas maltophilia (Pseudomonas maltophilia) protein is Dicamba O-demethylase, ferredoxin component.